A 464-amino-acid chain; its full sequence is Glutamate--tRNA ligase (464 aa).

Positions 11 to 21 (PSPTGYLHIGG) match the 'HIGH' region motif. A 'KMSKS' region motif is present at residues 253-257 (KLSKR). Residue Lys256 coordinates ATP.

It belongs to the class-I aminoacyl-tRNA synthetase family. Glutamate--tRNA ligase type 1 subfamily. Monomer.

The protein localises to the cytoplasm. The enzyme catalyses tRNA(Glu) + L-glutamate + ATP = L-glutamyl-tRNA(Glu) + AMP + diphosphate. Catalyzes the attachment of glutamate to tRNA(Glu) in a two-step reaction: glutamate is first activated by ATP to form Glu-AMP and then transferred to the acceptor end of tRNA(Glu). This is Glutamate--tRNA ligase from Metamycoplasma arthritidis (strain 158L3-1) (Mycoplasma arthritidis).